The following is a 750-amino-acid chain: MLCPCRGKLKLLVVSLSFVILFTWLYLLVGNSENGRSLLLSACLVESTEARLLERDVLASRVREVEEENRQIRLQLSQSQGLAGQPAEGNYGNQQWVASADTGPEDVENTAEERANHSECSRSPTAEKCELLHVACVCAGHNASRDVVTLVKSILFHRRNPLHFHFITDTVANQILSTLFQSWMVPSVQVSFYDADELKSEVSWIPNKHYSGIYGLMKLTLTKALPSNLSKVIVLDTDITFATDIAELWAIFRKFTEKQVIGLVENQSDWYLGNLWKNHKPWPALGRGFNTGVILLYLERLRRMGWEQMWRLTAERELMSMLSTSLADQDIFNAFIKQNPVLVHQLPCFWNVQLSDHTRSEQCYTEVSDLKVIHWNSPKKLRVKNKHVEFFRNLYLTFLEYDGNLLRRELFGCPSQASSESTVLQQALEELDEDDQCYDFRRERIMLHRVHLYFLQYEYSPTDDGTDITLVAQLSMDRLQMLEAICKHWEGPISLALYMSDAEAQQFLRYAQASEVLKNRKNVGYHIVYKEGQFYPVNLVRNVALRNVNTPYVFLTDVDFLPMYGLYDYLRKSIVQLDMANTKKALVVPAFETLRYRLSFPKSKAELLSMLDMGTLYTFRYHVWTKGHAPTNYAKWRTATTPYKVEWEADFEPYVVVRRDCPEYDQRFVGFGWNKVSHIMELDAQEYDLIVLPNAFMIHMPHAPSFDISKFRSSPSYRYCLTTLKDEFHQDLSRKYGSAALKYLTAQRNI.

Residues 1–10 lie on the Cytoplasmic side of the membrane; sequence MLCPCRGKLK. Residues 11–31 form a helical; Signal-anchor for type II membrane protein membrane-spanning segment; it reads LLVVSLSFVILFTWLYLLVGN. Residues 32 to 750 lie on the Lumenal side of the membrane; it reads SENGRSLLLS…LKYLTAQRNI (719 aa). Residues asparagine 116, asparagine 142, and asparagine 228 are each glycosylated (N-linked (GlcNAc...) asparagine). Residues 132-407 are xylosyltransferase activity; the sequence is LHVACVCAGH…FLEYDGNLLR (276 aa). Mn(2+) contacts are provided by aspartate 236 and aspartate 238. Asparagine 266 carries an N-linked (GlcNAc...) asparagine glycan. The tract at residues 408 to 750 is glucuronyltransferase activity; sequence RELFGCPSQA…LKYLTAQRNI (343 aa). 2 residues coordinate Mn(2+): aspartate 557 and aspartate 559.

It in the C-terminal section; belongs to the glycosyltransferase 49 family. In the N-terminal section; belongs to the glycosyltransferase 8 family. Mn(2+) serves as cofactor.

The protein resides in the golgi apparatus membrane. The enzyme catalyses 3-O-[beta-D-GlcA-(1-&gt;3)-beta-D-Xyl-(1-&gt;4)-Rib-ol-P-Rib-ol-P-3-beta-D-GalNAc-(1-&gt;3)-beta-D-GlcNAc-(1-&gt;4)-(O-6-P-alpha-D-Man)]-Thr-[protein] + UDP-alpha-D-xylose = 3-O-[alpha-D-Xyl-(1-&gt;3)-beta-D-GlcA-(1-&gt;4)-beta-D-Xyl-(1-&gt;4)-Rib-ol-P-Rib-ol-P-3-beta-D-GalNAc-(1-&gt;3)-beta-D-GlcNAc-(1-&gt;4)-(O-6-P-alpha-D-Man)]-Thr-[protein] + UDP + H(+). It carries out the reaction 3-O-{(1-&gt;[3)-alpha-D-Xyl-(1-&gt;3)-beta-D-GlcA-(1-&gt;](n)-4)-beta-D-Xyl-(1-&gt;4)-Rib-ol-P-Rib-ol-P-3-beta-D-GalNAc-(1-&gt;3)-beta-D-GlcNAc-(1-&gt;4)-O-6-P-alpha-D-Man}-L-Thr-[protein] + UDP-alpha-D-glucuronate = 3-O-{beta-D-GlcA-(1-&gt;[3)-alpha-D-Xyl-(1-&gt;3)-beta-D-GlcA-(1-&gt;](n)-4)-beta-D-Xyl-(1-&gt;4)-Rib-ol-P-Rib-ol-P-3-beta-D-GalNAc-(1-&gt;3)-beta-D-GlcNAc-(1-&gt;4)-O-6-P-alpha-D-Man}-L-Thr-[protein] + UDP + H(+). It catalyses the reaction 3-O-{beta-D-GlcA-(1-&gt;[3)-alpha-D-Xyl-(1-&gt;3)-beta-D-GlcA-(1-&gt;](n)-4)-beta-D-Xyl-(1-&gt;4)-Rib-ol-P-Rib-ol-P-3-beta-D-GalNAc-(1-&gt;3)-beta-D-GlcNAc-(1-&gt;4)-O-6-P-alpha-D-Man}-L-Thr-[protein] + UDP-alpha-D-xylose = 3-O-{(1-&gt;[3)-alpha-D-Xyl-(1-&gt;3)-beta-D-GlcA-(1-&gt;](n+1)-4)-beta-D-Xyl-(1-&gt;4)-Rib-ol-P-Rib-ol-P-3-beta-D-GalNAc-(1-&gt;3)-beta-D-GlcNAc-(1-&gt;4)-O-6-P-alpha-D-Man}-L-Thr-[protein] + UDP + H(+). It functions in the pathway protein modification; protein glycosylation. Functionally, bifunctional glycosyltransferase with both alpha-1,3-xylosyltransferase and beta-1,3-glucuronyltransferase activities involved in the maturation of alpha-dystroglycan (DAG1) by glycosylation leading to DAG1 binding to laminin G-like domain-containing extracellular proteins with high affinity and in a phosphorylated-O-mannosyl trisaccharide dependent manner. Elongates the glucuronyl-beta-1,4-xylose-beta disaccharide primer structure by adding repeating units [-3-Xylose-alpha-1,3-GlcA-beta-1-] to produce a heteropolysaccharide. Supports the maturation of DAG1 more effectively than LARGE1. In addition, can modify both heparan sulfate (HS)- and chondroitin/dermatan sulfate (CS/DS)-proteoglycans (PGs), namely GPC4, with a glycosaminoglycan (GAG)-like polysaccharide composed of xylose and glucuronic acid to confer laminin binding. In Danio rerio (Zebrafish), this protein is Xylosyl- and glucuronyltransferase LARGE2s.